A 292-amino-acid polypeptide reads, in one-letter code: Tetrahydromethanopterin:alpha-L-glutamate ligase (292 aa).

One can recognise an ATP-grasp domain in the interval 103-286; that stretch reads SFLMEVHKIP…IAQNLIDEAL (184 aa). ATP contacts are provided by residues lysine 138, 176–188, and arginine 204; that span reads QEFV…VYRD. Aspartate 247, glutamate 259, and asparagine 261 together coordinate Mg(2+). Mn(2+)-binding residues include aspartate 247, glutamate 259, and asparagine 261.

The protein belongs to the RimK family. MptN subfamily. Homodimer. It depends on Mg(2+) as a cofactor. Requires Mn(2+) as cofactor.

The enzyme catalyses 5,6,7,8-tetrahydromethanopterin + L-glutamate + ATP = 5,6,7,8-tetrahydrosarcinapterin + ADP + phosphate + H(+). The protein operates within cofactor biosynthesis; 5,6,7,8-tetrahydrosarcinapterin biosynthesis. Functionally, catalyzes the ATP or GTP-dependent addition of one L-glutamate molecule to tetrahydromethanopterin, producing tetrahydrosarcinapterin. This chain is Tetrahydromethanopterin:alpha-L-glutamate ligase (mptN), found in Methanococcus maripaludis (strain DSM 14266 / JCM 13030 / NBRC 101832 / S2 / LL).